The chain runs to 346 residues: Protein RecA (346 aa).

67–74 (GPESSGKT) lines the ATP pocket.

This sequence belongs to the RecA family.

The protein resides in the cytoplasm. In terms of biological role, can catalyze the hydrolysis of ATP in the presence of single-stranded DNA, the ATP-dependent uptake of single-stranded DNA by duplex DNA, and the ATP-dependent hybridization of homologous single-stranded DNAs. It interacts with LexA causing its activation and leading to its autocatalytic cleavage. This chain is Protein RecA, found in Mycobacteroides abscessus (strain ATCC 19977 / DSM 44196 / CCUG 20993 / CIP 104536 / JCM 13569 / NCTC 13031 / TMC 1543 / L948) (Mycobacterium abscessus).